A 305-amino-acid chain; its full sequence is Ribonuclease BN (305 aa).

Residues His-64, His-66, Asp-68, His-69, His-141, Asp-212, and His-270 each contribute to the Zn(2+) site. The Proton acceptor role is filled by Asp-68.

This sequence belongs to the RNase Z family. RNase BN subfamily. As to quaternary structure, homodimer. Zn(2+) is required as a cofactor.

Zinc phosphodiesterase, which has both exoribonuclease and endoribonuclease activities. The polypeptide is Ribonuclease BN (Escherichia coli O157:H7).